The primary structure comprises 357 residues: GTPase Obg (357 aa).

One can recognise an Obg domain in the interval 1 to 159 (MKFVDEAFID…RNLKLELKVL (159 aa)). Positions 160–334 (ADVGLLGMPN…LIQAIYQHVR (175 aa)) constitute an OBG-type G domain. GTP contacts are provided by residues 166–173 (GMPNAGKS), 191–195 (FTTLH), 213–216 (DIPG), 284–287 (NKLD), and 315–317 (SAL). S173 and T193 together coordinate Mg(2+).

The protein belongs to the TRAFAC class OBG-HflX-like GTPase superfamily. OBG GTPase family. In terms of assembly, monomer. Mg(2+) serves as cofactor.

The protein resides in the cytoplasm. An essential GTPase which binds GTP, GDP and possibly (p)ppGpp with moderate affinity, with high nucleotide exchange rates and a fairly low GTP hydrolysis rate. Plays a role in control of the cell cycle, stress response, ribosome biogenesis and in those bacteria that undergo differentiation, in morphogenesis control. This chain is GTPase Obg, found in Paracidovorax citrulli (strain AAC00-1) (Acidovorax citrulli).